We begin with the raw amino-acid sequence, 292 residues long: Tumor necrosis factor alpha-induced protein 8-like protein 3 (292 aa).

Residues 81-107 (DAQPAARSMDSDSGEQSEGEPVTAAGP) are disordered. A binding to phosphoinositides region spans residues 109-292 (VFSSKSLALQ…INKLLDEKVL (184 aa)).

It belongs to the TNFAIP8 family. As to expression, widely expressed (at protein level). Highly expressed in most carcinoma cell lines.

Its subcellular location is the cytoplasm. It localises to the cell membrane. Acts as a lipid transfer protein. Preferentially captures and shuttles two lipid second messengers, i.e., phosphatidylinositol 4,5- bisphosphate and phosphatidylinositol 3,4,5-trisphosphate and increases their levels in the plasma membrane. Additionally, may also function as a lipid-presenting protein to enhance the activity of the PI3K-AKT and MEK-ERK pathways. May act as a regulator of tumorigenesis through its activation of phospholipid signaling. The chain is Tumor necrosis factor alpha-induced protein 8-like protein 3 (TNFAIP8L3) from Homo sapiens (Human).